A 261-amino-acid polypeptide reads, in one-letter code: Single-strand annealing weakened protein 1 (261 aa).

As to quaternary structure, interacts with MSH2, MSH3, RAD1, RAD10, RAD51 and RAD52.

It localises to the nucleus. Functionally, catalyzes 3'-non-homologous tail removal of RAD1/RAD10-dependent single-strand annealing recombination intermediates. Plays a key role in targeting RAD1/RAD10 complex to 3'-flap cleavage substrate in recombination. Also contributes to the integrity of ribosomal DNA arrays. The sequence is that of Single-strand annealing weakened protein 1 (SAW1) from Saccharomyces cerevisiae (strain ATCC 204508 / S288c) (Baker's yeast).